The sequence spans 861 residues: MATEEAIIRIPPYHYIHVLDQNSNVSRVEVGPKTYIRQDNERVLFAPVRMVTVPPRHYCIVANPVSRDAQSSVLFDVTGQVRLRHADQEIRLAQDPFPLYPGELLEKDITPLQVVLPNTALHLKALLDFEDKNGDKVMAGDEWLFEGPGTYIPQKEVEVVEIIQATVIKQNQALRLRARKECFDRDGKERVTGEEWLVRSVGAYLPAVFEEVLDLVDAVILTEKTALHLRARQNFKDLRGVAHRTGEEWLVTVQDTEAHVPDVYEEVLGVVPITTLGPRHYCVILDPMGPDGKNQLGQKRVVKGEKSFFLQPGERLERGIQDVYVLSEQQGLLLKALQPLEEGEGEEKVAHQAGDRWLIRGPLEYVPSAKVEVVEERQAIPLDQNEGIYVQDVKTGKVRAVIGSTYMLTQDEVLWEKELPSGVEELLNLGHDPLADRGQKGTAKVLQPSAARNKTRVVSYRVPHNAAVQVYDYRAKRARVVFGPELVSLDPEEQFTVLSLSAGRPKRPHARRALCLLLGPDFFTDVITIETADHARLQLQLAYNWHFELKNRNDPEETAKLFSVPDFVGDACKAIASRVRGAVASVTFDDFHKNSARIIRMAVFGFEMSEDAGPDGALLPRARDRAVFPQNGLVVSSVDVQSVEPVDQRTRDALQRSVQLAIEITTNSQEAAAKHEAQRLEQEARGRLERQKILDQSEAEKARKELLELEAMSMAVESTGNAKAEAESRAEAARIEGEGSVLQAKLKAQALAIETEAELERVKKVREMELIYSRAQLELEVSKAQQLADVEAKKFKEMTEALGPGTIRDLAVAGPEMQVKLLQSLGLKSTLITDGSSPINLFNTAFGLLGLGSDGQPPVQK.

A2 is subject to N-acetylalanine. MVP repeat units follow at residues 2–56 (ATEE…VPPR), 57–111 (HYCI…DITP), 112–164 (LQVV…EIIQ), 165–217 (ATVI…DLVD), 218–272 (AVIL…GVVP), 273–323 (ITTL…IQDV), 324–379 (YVLS…ERQA), 380–457 (IPLD…KTRV), and 458–520 (VSYR…LLGP). The residue at position 421 (S421) is a Phosphoserine. A Glycyl lysine isopeptide (Lys-Gly) (interchain with G-Cter in SUMO2) cross-link involves residue K444. Residue K704 forms a Glycyl lysine isopeptide (Lys-Gly) (interchain with G-Cter in SUMO2) linkage.

The vault ribonucleoprotein particle is a huge (400 A x 670 A) cage structure of 12.9 MDa. It consists of a dimer of half-vaults, with each half-vault comprising 39 identical major vault protein (MVP) chains, PARP4 and one or more vault RNAs (vRNAs). Interacts with PTEN and activated MAPK1. The phosphorylated protein interacts with the SH2 domains of PTPN11 and SRC. Interacts with APEX1. May interact with ZNF540. Interacts with TEP1. Post-translationally, phosphorylated on Tyr residues after EGF stimulation. In terms of processing, dephosphorylated by PTPN11.

The protein localises to the cytoplasm. Its subcellular location is the nucleus. Its function is as follows. Required for normal vault structure. Vaults are multi-subunit structures that may act as scaffolds for proteins involved in signal transduction. Vaults may also play a role in nucleo-cytoplasmic transport. Down-regulates IFNG-mediated STAT1 signaling and subsequent activation of JAK. Down-regulates SRC activity and signaling through MAP kinases. The chain is Major vault protein (Mvp) from Mus musculus (Mouse).